The following is a 389-amino-acid chain: PqqA peptide cyclase (389 aa).

Positions 19–234 constitute a Radical SAM core domain; sequence VGLPLWLLAE…TNEYRDQLAA (216 aa). Residues C33, C37, and C40 each coordinate [4Fe-4S] cluster.

The protein belongs to the radical SAM superfamily. PqqE family. As to quaternary structure, interacts with PqqD. The interaction is necessary for activity of PqqE. [4Fe-4S] cluster is required as a cofactor.

The enzyme catalyses [PQQ precursor protein] + S-adenosyl-L-methionine = E-Y cross-linked-[PQQ precursor protein] + 5'-deoxyadenosine + L-methionine + H(+). The protein operates within cofactor biosynthesis; pyrroloquinoline quinone biosynthesis. Functionally, catalyzes the cross-linking of a glutamate residue and a tyrosine residue in the PqqA protein as part of the biosynthesis of pyrroloquinoline quinone (PQQ). This is PqqA peptide cyclase from Pseudomonas syringae pv. tomato (strain ATCC BAA-871 / DC3000).